The sequence spans 165 residues: Heme oxygenase (165 aa).

It belongs to the heme oxygenase family.

It catalyses the reaction heme b + 3 reduced [NADPH--hemoprotein reductase] + 3 O2 = biliverdin IXalpha + CO + Fe(2+) + 3 oxidized [NADPH--hemoprotein reductase] + 3 H2O + H(+). Its function is as follows. Catalyzes the opening of the heme ring to form the open-chain tetrapyrrole biliverdin IX with the release of iron and carbon monoxide (CO). The sequence is that of Heme oxygenase (bphO) from Xanthomonas campestris pv. campestris (strain 8004).